The sequence spans 341 residues: UDP-3-O-acylglucosamine N-acyltransferase (341 aa).

His241 (proton acceptor) is an active-site residue.

This sequence belongs to the transferase hexapeptide repeat family. LpxD subfamily. As to quaternary structure, homotrimer.

It catalyses the reaction a UDP-3-O-[(3R)-3-hydroxyacyl]-alpha-D-glucosamine + a (3R)-hydroxyacyl-[ACP] = a UDP-2-N,3-O-bis[(3R)-3-hydroxyacyl]-alpha-D-glucosamine + holo-[ACP] + H(+). It functions in the pathway bacterial outer membrane biogenesis; LPS lipid A biosynthesis. Functionally, catalyzes the N-acylation of UDP-3-O-acylglucosamine using 3-hydroxyacyl-ACP as the acyl donor. Is involved in the biosynthesis of lipid A, a phosphorylated glycolipid that anchors the lipopolysaccharide to the outer membrane of the cell. The protein is UDP-3-O-acylglucosamine N-acyltransferase of Mannheimia succiniciproducens (strain KCTC 0769BP / MBEL55E).